Reading from the N-terminus, the 292-residue chain is 4-hydroxy-tetrahydrodipicolinate synthase (292 aa).

T45 is a binding site for pyruvate. The Proton donor/acceptor role is filled by Y133. The Schiff-base intermediate with substrate role is filled by K161. I203 contacts pyruvate.

It belongs to the DapA family. Homotetramer; dimer of dimers.

The protein localises to the cytoplasm. It carries out the reaction L-aspartate 4-semialdehyde + pyruvate = (2S,4S)-4-hydroxy-2,3,4,5-tetrahydrodipicolinate + H2O + H(+). The protein operates within amino-acid biosynthesis; L-lysine biosynthesis via DAP pathway; (S)-tetrahydrodipicolinate from L-aspartate: step 3/4. Catalyzes the condensation of (S)-aspartate-beta-semialdehyde [(S)-ASA] and pyruvate to 4-hydroxy-tetrahydrodipicolinate (HTPA). The protein is 4-hydroxy-tetrahydrodipicolinate synthase of Nitrosomonas eutropha (strain DSM 101675 / C91 / Nm57).